Here is a 111-residue protein sequence, read N- to C-terminus: Cell division protein FtsB (111 aa).

Residues 1 to 3 lie on the Cytoplasmic side of the membrane; sequence MGK. The helical transmembrane segment at 4 to 21 threads the bilayer; the sequence is LTLLLLILLGWLQYSLWL. Topologically, residues 22–111 are periplasmic; sequence GKNGIHDYVR…TNTPSNNIQR (90 aa). A coiled-coil region spans residues 33 to 63; sequence KDDVVVQQGNNAKLKDRNEQLFAEIDDLNGG. The tract at residues 90–111 is disordered; the sequence is ESNHRNANTAPSTNTPSNNIQR. Low complexity predominate over residues 95-111; the sequence is NANTAPSTNTPSNNIQR.

The protein belongs to the FtsB family. Part of a complex composed of FtsB, FtsL and FtsQ.

It is found in the cell inner membrane. In terms of biological role, essential cell division protein. May link together the upstream cell division proteins, which are predominantly cytoplasmic, with the downstream cell division proteins, which are predominantly periplasmic. The chain is Cell division protein FtsB from Pectobacterium carotovorum subsp. carotovorum (strain PC1).